Here is a 322-residue protein sequence, read N- to C-terminus: Digestive cysteine proteinase 1 (322 aa).

A signal peptide spans 1–16 (MKVVALFLFGLALAAA). The propeptide at 17–105 (NPSWEEFKGK…VFTSTDAAPE (89 aa)) is activation peptide. Cystine bridges form between Cys-126/Cys-170, Cys-160/Cys-203, and Cys-262/Cys-311. Residue Cys-129 is part of the active site. Catalysis depends on residues His-269 and Asn-289.

The protein belongs to the peptidase C1 family.

Inhibited by E-64, antipain, leupeptin, heavy metal ions, iodoacetic acid, dithionitrobenzene, p-hydroxymercuri-benzoate; activated by mercaptoethanol and dithiothreitol. This Homarus americanus (American lobster) protein is Digestive cysteine proteinase 1 (LCP1).